A 504-amino-acid polypeptide reads, in one-letter code: Fumitremorgin C monooxygenase (504 aa).

Residues 9 to 29 (LPYPGVVGASLLVILGIILLF) traverse the membrane as a helical segment. Cysteine 442 contributes to the heme binding site.

The protein belongs to the cytochrome P450 family. It depends on heme as a cofactor.

Its subcellular location is the membrane. The enzyme catalyses fumitremorgin C + 2 reduced [NADPH--hemoprotein reductase] + 2 O2 = 12alpha,13alpha-dihydroxyfumitremorgin C + 2 oxidized [NADPH--hemoprotein reductase] + 2 H2O + 2 H(+). The protein operates within mycotoxin biosynthesis. Cytochrome P450 monooxygenase; part of the gene cluster that mediates the biosynthesis of fumitremorgins, indole alkaloids that carry not only intriguing chemical structures, but also interesting biological and pharmacological activities. The biosynthesis of fumitremorgin-type alkaloids begins by condensation of the two amino acids L-tryptophan and L-proline to brevianamide F, catalyzed by the non-ribosomal peptide synthetase ftmPS/ftmA. Brevianamide F is then prenylated by the prenyltransferase ftmPT1/ftmB in the presence of dimethylallyl diphosphate, resulting in the formation of tryprostatin B. The three cytochrome P450 monooxygenases, ftmP450-1/ftmC, ftmP450-2/ftmE and ftmP450-3/FtmG, are responsible for the conversion of tryprostatin B to 6-hydroxytryprostatin B, tryprostatin A to fumitremorgin C and fumitremorgin C to 12,13-dihydroxyfumitremorgin C, respectively. The putative methyltransferase ftmMT/ftmD is expected for the conversion of 6-hydroxytryprostatin B to tryprostatin A. FtmPT2/FtmH catalyzes the prenylation of 12,13-dihydroxyfumitre-morgin C in the presence of dimethylallyl diphosphate, resulting in the formation of fumitremorgin B. Fumitremorgin B is further converted to verruculogen by ftmOx1/ftmF via the insertion of an endoperoxide bond between the two prenyl moieties. Finally, verruculogen is further converted to fumitremorgin A by the verruculogen prenyltransferase ftmPT3. This Neosartorya fischeri (strain ATCC 1020 / DSM 3700 / CBS 544.65 / FGSC A1164 / JCM 1740 / NRRL 181 / WB 181) (Aspergillus fischerianus) protein is Fumitremorgin C monooxygenase.